The following is a 163-amino-acid chain: Phosphopantetheine adenylyltransferase (163 aa).

A substrate-binding site is contributed by S11. ATP contacts are provided by residues 11 to 12 (SF) and H19. Residues K43, A76, and R90 each coordinate substrate. ATP contacts are provided by residues 91–93 (GLR), E101, and 126–132 (WQALSSS).

The protein belongs to the bacterial CoaD family. In terms of assembly, homohexamer. Mg(2+) serves as cofactor.

It localises to the cytoplasm. The enzyme catalyses (R)-4'-phosphopantetheine + ATP + H(+) = 3'-dephospho-CoA + diphosphate. The protein operates within cofactor biosynthesis; coenzyme A biosynthesis; CoA from (R)-pantothenate: step 4/5. Its function is as follows. Reversibly transfers an adenylyl group from ATP to 4'-phosphopantetheine, yielding dephospho-CoA (dPCoA) and pyrophosphate. The sequence is that of Phosphopantetheine adenylyltransferase from Streptococcus pyogenes serotype M2 (strain MGAS10270).